The sequence spans 354 residues: 3-isopropylmalate dehydrogenase (354 aa).

Residue Gly76–Glu87 coordinates NAD(+). Substrate contacts are provided by Arg94, Arg104, Arg130, and Asp215. The Mg(2+) site is built by Asp215, Asp239, and Asp243. Gly273–Asn285 is a binding site for NAD(+).

Belongs to the isocitrate and isopropylmalate dehydrogenases family. LeuB type 1 subfamily. As to quaternary structure, homodimer. It depends on Mg(2+) as a cofactor. Mn(2+) serves as cofactor.

Its subcellular location is the cytoplasm. The enzyme catalyses (2R,3S)-3-isopropylmalate + NAD(+) = 4-methyl-2-oxopentanoate + CO2 + NADH. Its pathway is amino-acid biosynthesis; L-leucine biosynthesis; L-leucine from 3-methyl-2-oxobutanoate: step 3/4. Its function is as follows. Catalyzes the oxidation of 3-carboxy-2-hydroxy-4-methylpentanoate (3-isopropylmalate) to 3-carboxy-4-methyl-2-oxopentanoate. The product decarboxylates to 4-methyl-2 oxopentanoate. This chain is 3-isopropylmalate dehydrogenase, found in Bacillus cereus (strain ATCC 10987 / NRS 248).